Reading from the N-terminus, the 522-residue chain is Glucose-6-phosphate 1-dehydrogenase (522 aa).

Residues 40–47 (GASGDLAK), arginine 74, and lysine 177 each bind NADP(+). D-glucose 6-phosphate contacts are provided by residues lysine 177, 207–211 (HYLGK), glutamate 245, and aspartate 264. Histidine 269 (proton acceptor) is an active-site residue. An NADP(+)-binding site is contributed by arginine 364. D-glucose 6-phosphate is bound by residues lysine 367 and lysine 372. NADP(+) contacts are provided by lysine 373, arginine 377, and arginine 401. A D-glucose 6-phosphate-binding site is contributed by glutamine 403. Residues 409–411 (YMK), 429–431 (DLT), arginine 495, and tryptophan 517 contribute to the NADP(+) site.

The protein belongs to the glucose-6-phosphate dehydrogenase family.

The protein resides in the cytoplasm. It is found in the cytosol. It carries out the reaction D-glucose 6-phosphate + NADP(+) = 6-phospho-D-glucono-1,5-lactone + NADPH + H(+). The protein operates within carbohydrate degradation; pentose phosphate pathway; D-ribulose 5-phosphate from D-glucose 6-phosphate (oxidative stage): step 1/3. Functionally, cytosolic glucose-6-phosphate dehydrogenase that catalyzes the first and rate-limiting step of the oxidative branch within the pentose phosphate pathway/shunt, an alternative route to glycolysis for the dissimilation of carbohydrates and a major source of reducing power and metabolic intermediates for fatty acid and nucleic acid biosynthetic processes. The polypeptide is Glucose-6-phosphate 1-dehydrogenase (gspd-1) (Caenorhabditis elegans).